A 446-amino-acid polypeptide reads, in one-letter code: C4-dicarboxylate transport protein 2 (446 aa).

10 consecutive transmembrane segments (helical) span residues 7–26 (PLFG…GIWA), 46–64 (MLIA…CGAG), 77–99 (VIYF…YAFG), 152–171 (ILQV…LLGE), 192–211 (AVVI…FTVG), 221–243 (LGFL…LGGI), 291–313 (VVGL…YLTL), 318–340 (IAQA…VALI), 353–375 (IVIL…VLVL), and 381–403 (IGIA…IAAW).

The protein belongs to the dicarboxylate/amino acid:cation symporter (DAACS) (TC 2.A.23) family.

The protein resides in the cell inner membrane. In terms of biological role, responsible for the transport of dicarboxylates such as succinate, fumarate, and malate from the periplasm across the membrane. The polypeptide is C4-dicarboxylate transport protein 2 (dctA2) (Ralstonia nicotianae (strain ATCC BAA-1114 / GMI1000) (Ralstonia solanacearum)).